Reading from the N-terminus, the 868-residue chain is Translation initiation factor IF-2 (868 aa).

2 stretches are compositionally biased toward basic and acidic residues: residues 156-166 (ETVKEEEKINS) and 199-209 (SKKEEVKPEKV). Disordered regions lie at residues 156–177 (ETVK…QDEL) and 199–269 (SKKE…KYRE). Over residues 249–260 (RGGRSKFKKKKG) the composition is skewed to basic residues. Residues 368–537 (GRAPVVTIMG…LLQSEVLELK (170 aa)) enclose the tr-type G domain. Residues 377 to 384 (GHVDHGKT) form a G1 region. Residue 377–384 (GHVDHGKT) participates in GTP binding. The interval 402–406 (GITQH) is G2. Residues 423 to 426 (DTPG) are G3. GTP contacts are provided by residues 423-427 (DTPGH) and 477-480 (NKMD). Residues 477–480 (NKMD) form a G4 region. Residues 513–515 (SAK) are G5.

This sequence belongs to the TRAFAC class translation factor GTPase superfamily. Classic translation factor GTPase family. IF-2 subfamily.

It is found in the cytoplasm. In terms of biological role, one of the essential components for the initiation of protein synthesis. Protects formylmethionyl-tRNA from spontaneous hydrolysis and promotes its binding to the 30S ribosomal subunits. Also involved in the hydrolysis of GTP during the formation of the 70S ribosomal complex. In Legionella pneumophila subsp. pneumophila (strain Philadelphia 1 / ATCC 33152 / DSM 7513), this protein is Translation initiation factor IF-2.